Here is a 1009-residue protein sequence, read N- to C-terminus: Type VII secretion system accessory factor EsaA (1009 aa).

6 helical membrane passes run 7-27 (IYALIVTLIIIIAIVSMIFFV), 822-842 (ISPTLFVLLMYLLSMITAYIF), 869-889 (VITSGVIGTTGLVEGLIVGLI), 903-923 (KFILMVILTMMVFVLINTYLL), 928-948 (SIGMFLMIAALGLYFVAMNNL), and 979-999 (IGLALVILTVLVIIGFVLNMF).

Belongs to the EsaA family. In terms of assembly, homodimer. Interacts with EssB.

The protein localises to the cell membrane. Its function is as follows. Component of the type VII secretion system (Ess). Provides together with EssB and other components such as EssC and EssE a secretion platform across the cytoplasmic membrane in the host. This Staphylococcus aureus (strain MSSA476) protein is Type VII secretion system accessory factor EsaA.